A 461-amino-acid polypeptide reads, in one-letter code: UDP-N-acetylmuramoylalanine--D-glutamate ligase (461 aa).

117–123 (GTNGKTT) contacts ATP.

This sequence belongs to the MurCDEF family.

The protein resides in the cytoplasm. It catalyses the reaction UDP-N-acetyl-alpha-D-muramoyl-L-alanine + D-glutamate + ATP = UDP-N-acetyl-alpha-D-muramoyl-L-alanyl-D-glutamate + ADP + phosphate + H(+). It participates in cell wall biogenesis; peptidoglycan biosynthesis. Its function is as follows. Cell wall formation. Catalyzes the addition of glutamate to the nucleotide precursor UDP-N-acetylmuramoyl-L-alanine (UMA). This is UDP-N-acetylmuramoylalanine--D-glutamate ligase from Synechococcus sp. (strain CC9605).